The following is a 181-amino-acid chain: UPF0398 protein lmo1889 (181 aa).

It belongs to the UPF0398 family.

The polypeptide is UPF0398 protein lmo1889 (Listeria monocytogenes serovar 1/2a (strain ATCC BAA-679 / EGD-e)).